A 697-amino-acid polypeptide reads, in one-letter code: Zinc finger protein 12 (697 aa).

A Glycyl lysine isopeptide (Lys-Gly) (interchain with G-Cter in SUMO2) cross-link involves residue Lys3. Residues 8–79 (VSFKDVAVDF…EGEFLLQSYP (72 aa)) form the KRAB domain. Glycyl lysine isopeptide (Lys-Gly) (interchain with G-Cter in SUMO2) cross-links involve residues Lys98, Lys179, Lys182, Lys209, Lys215, Lys224, Lys239, and Lys267. 2 consecutive C2H2-type zinc fingers follow at residues 269 to 291 (YECS…QRTH) and 297 to 319 (YECN…QRTH). Residues Lys309, Lys323, Lys337, and Lys365 each participate in a glycyl lysine isopeptide (Lys-Gly) (interchain with G-Cter in SUMO2) cross-link. C2H2-type zinc fingers lie at residues 325 to 347 (YECN…QRTH), 353 to 375 (YECS…QRTH), 381 to 403 (YVCH…QKIH), 409 to 431 (YKCS…LRTH), 437 to 459 (YECN…YRTH), 465 to 487 (YECN…QRVH), 493 to 515 (YECN…HRTH), and 521 to 543 (YECS…RRIH). Residues Lys544 and Lys547 each participate in a glycyl lysine isopeptide (Lys-Gly) (interchain with G-Cter in SUMO2) cross-link. 5 consecutive C2H2-type zinc fingers follow at residues 549–571 (YECY…HRIH), 577–599 (YECS…QRTH), 605–627 (YECY…HRIH), 633–655 (FECN…YRTH), and 661–683 (YECT…QRIH).

Belongs to the krueppel C2H2-type zinc-finger protein family. As to expression, widely expressed in various adult tissues and embryonic developmental stages (isoform 3).

The protein resides in the nucleus. Functionally, transcriptional repressor which suppresses activation protein 1 (AP-1)- and serum response element (SRE)-mediated transcriptional activity. The chain is Zinc finger protein 12 (ZNF12) from Homo sapiens (Human).